The following is a 73-amino-acid chain: Sec-independent protein translocase protein TatA (73 aa).

The helical transmembrane segment at Met-1 to Gly-21 threads the bilayer. Residues Lys-44 to Lys-73 form a disordered region. Residues Gln-52–Glu-61 are compositionally biased toward polar residues. A compositionally biased stretch (basic and acidic residues) spans Lys-62–Lys-73.

Belongs to the TatA/E family. In terms of assembly, the Tat system comprises two distinct complexes: a TatABC complex, containing multiple copies of TatA, TatB and TatC subunits, and a separate TatA complex, containing only TatA subunits. Substrates initially bind to the TatABC complex, which probably triggers association of the separate TatA complex to form the active translocon.

Its subcellular location is the cell inner membrane. Part of the twin-arginine translocation (Tat) system that transports large folded proteins containing a characteristic twin-arginine motif in their signal peptide across membranes. TatA could form the protein-conducting channel of the Tat system. The polypeptide is Sec-independent protein translocase protein TatA (Polynucleobacter asymbioticus (strain DSM 18221 / CIP 109841 / QLW-P1DMWA-1) (Polynucleobacter necessarius subsp. asymbioticus)).